A 104-amino-acid chain; its full sequence is Protein ArtA (104 aa).

The sequence is that of Protein ArtA (artA) from Escherichia coli (strain K12).